A 78-amino-acid chain; its full sequence is Beta-defensin 105 (78 aa).

The signal sequence occupies residues 1 to 27 (MALIRKTFYFLFAMFFILVQLPSGCQA). 3 disulfide bridges follow: cysteine 43-cysteine 74, cysteine 53-cysteine 67, and cysteine 57-cysteine 73.

This sequence belongs to the beta-defensin family. Specifically expressed in testis.

The protein localises to the secreted. In terms of biological role, has antibacterial activity. This chain is Beta-defensin 105 (DEFB105A), found in Homo sapiens (Human).